Here is a 582-residue protein sequence, read N- to C-terminus: Bifunctional lycopene cyclase/phytoene synthase (582 aa).

A lycopene beta-cyclase region spans residues 1 to 261 (MNQNGTRLCY…VVLGLVGCDY (261 aa)). 6 helical membrane passes run 34–54 (CTYT…FFTA), 59–79 (KICI…SYLI), 99–121 (IPIE…YCIF), 142–162 (YVVA…LLLG), 170–190 (LILV…YPFL), and 242–262 (ALFF…CDYA). The phytoene synthase stretch occupies residues 268–582 (YESLSQPASD…LLSALVYRLE (315 aa)).

The protein in the N-terminal section; belongs to the lycopene beta-cyclase family. In the C-terminal section; belongs to the phytoene/squalene synthase family.

It is found in the membrane. The enzyme catalyses all-trans-lycopene = gamma-carotene. It catalyses the reaction gamma-carotene = all-trans-beta-carotene. The catalysed reaction is 2 (2E,6E,10E)-geranylgeranyl diphosphate = 15-cis-phytoene + 2 diphosphate. It participates in carotenoid biosynthesis; beta-carotene biosynthesis. The protein operates within carotenoid biosynthesis; phytoene biosynthesis; all-trans-phytoene from geranylgeranyl diphosphate: step 1/1. Its function is as follows. Bifunctional enzyme that catalyzes the reactions from geranylgeranyl diphosphate to phytoene (phytoene synthase) and lycopene to beta-carotene via the intermediate gamma-carotene (lycopene cyclase). In Aspergillus niger (strain ATCC MYA-4892 / CBS 513.88 / FGSC A1513), this protein is Bifunctional lycopene cyclase/phytoene synthase.